The chain runs to 266 residues: Undecaprenyl-diphosphatase (266 aa).

A run of 8 helical transmembrane segments spans residues 4-24 (WLIALILGLIEGLTEFIPVSS), 46-66 (VLIQLGAILAITGVYFGRLWG), 82-102 (IGILLAFLPAVFVGVAAHDFI), 105-125 (VLYETPALVCSTLIIGGFILL), 142-162 (YPLKTAFIIGLFQCLALVPGV), 182-202 (AAEFSFFLAMPTMAGAFAYDL), 216-236 (LIGIGFLAALVSGVFVVKTVL), and 244-264 (FAPFAYWRIAVGVVGLALLYI).

The protein belongs to the UppP family.

The protein localises to the cell inner membrane. It catalyses the reaction di-trans,octa-cis-undecaprenyl diphosphate + H2O = di-trans,octa-cis-undecaprenyl phosphate + phosphate + H(+). Its function is as follows. Catalyzes the dephosphorylation of undecaprenyl diphosphate (UPP). Confers resistance to bacitracin. The polypeptide is Undecaprenyl-diphosphatase (Caulobacter vibrioides (strain ATCC 19089 / CIP 103742 / CB 15) (Caulobacter crescentus)).